Consider the following 564-residue polypeptide: Septation ring formation regulator EzrA (564 aa).

Residues 1-4 (MVLF) are Extracellular-facing. A helical membrane pass occupies residues 5 to 23 (IILAILVVILIAIGVLFYM). The Cytoplasmic portion of the chain corresponds to 24 to 564 (RSNKRNLIEK…KHIEEQVIKE (541 aa)). 4 coiled-coil regions span residues 84–126 (VEEK…HQVT), 165–223 (EAAE…LIRE), 271–303 (MISR…YEVK), and 350–435 (VRQF…RRLL).

It belongs to the EzrA family.

It localises to the cell membrane. In terms of biological role, negative regulator of FtsZ ring formation; modulates the frequency and position of FtsZ ring formation. Inhibits FtsZ ring formation at polar sites. Interacts either with FtsZ or with one of its binding partners to promote depolymerization. The protein is Septation ring formation regulator EzrA of Staphylococcus epidermidis (strain ATCC 35984 / DSM 28319 / BCRC 17069 / CCUG 31568 / BM 3577 / RP62A).